The sequence spans 997 residues: Chromosomal passenger complex protein bir1 (997 aa).

2 BIR repeats span residues 25 to 99 (RLDT…PWAY) and 120 to 194 (REQT…VFFT). Residues Cys-163, Cys-166, His-183, and Cys-190 each contribute to the Zn(2+) site. Disordered stretches follow at residues 217–329 (EDLT…FSKG), 370–527 (TVSD…ENDE), 682–701 (TRDV…NHEE), 755–782 (SPKL…EKEA), and 817–838 (RTSV…ETKV). A compositionally biased stretch (polar residues) spans 240 to 252 (TLNFSPSRKNNLN). The span at 288 to 299 (PRRKNKSPKKSK) shows a compositional bias: basic residues. Residues 311–320 (SDEDEDDDDL) are compositionally biased toward acidic residues. The span at 370-392 (TVSDITGHQSVTDESDEQNNCMS) shows a compositional bias: polar residues. Low complexity predominate over residues 408 to 423 (SVVSKSKEISSSVSSV). The segment covering 426–451 (EQNHTEKQVAIETPEQQKVEKEDEHL) has biased composition (basic and acidic residues). Polar residues-rich tracts occupy residues 463-476 (KQPI…SSPD) and 485-512 (RVSS…FSNI). Residues 756–772 (PKLQSKNNQTVEAVNTE) are compositionally biased toward polar residues. Residues 773 to 782 (TSDKLQEKEA) are compositionally biased toward basic and acidic residues. The span at 817 to 830 (RTSVQNGTRSVSKN) shows a compositional bias: polar residues.

In terms of assembly, component of the CPC complex at least composed of ark1, bir1 and pic1. Interacts with the mitotic checkpoint complex (MCC) subunit mad3. Phosphorylated by ark1.

The protein localises to the nucleus. Its subcellular location is the cytoplasm. The protein resides in the cytoskeleton. It is found in the spindle. It localises to the chromosome. The protein localises to the centromere. Functionally, component of the chromosomal passenger complex (CPC), a complex that acts as a key regulator of chromosome segregation and cytokinesis. Has a role in chromosome segregation by recruiting condensin and ark1 kinase to appropriate sites as the cell progresses through mitosis. Ark1 activity depends upon bir1 function and phosphorylation. Ark1 with bir1 function is required for full-scale association with kinetochores and formation of a complex with mad3. The chain is Chromosomal passenger complex protein bir1 (bir1) from Schizosaccharomyces pombe (strain 972 / ATCC 24843) (Fission yeast).